Reading from the N-terminus, the 74-residue chain is Large ribosomal subunit protein bL31 (74 aa).

Zn(2+) is bound by residues C16, C18, C38, and C41.

The protein belongs to the bacterial ribosomal protein bL31 family. Type A subfamily. As to quaternary structure, part of the 50S ribosomal subunit. Requires Zn(2+) as cofactor.

In terms of biological role, binds the 23S rRNA. This chain is Large ribosomal subunit protein bL31, found in Acinetobacter baylyi (strain ATCC 33305 / BD413 / ADP1).